The chain runs to 512 residues: Na(+)/H(+) antiporter NhaB (512 aa).

The next 11 membrane-spanning stretches (helical) occupy residues 28-48 (FLII…WLLV), 52-72 (IFTL…LLAI), 97-117 (LLLM…LFIF), 144-164 (FLDA…FYGI), 201-221 (LMMH…VGEP), 237-257 (FFLR…LTCF), 296-330 (LALI…IILA), 347-367 (TEAL…AVII), 390-410 (LFYL…VGSV), 446-466 (ATPN…APLI), and 474-494 (VWMA…CVKF).

This sequence belongs to the NhaB Na(+)/H(+) (TC 2.A.34) antiporter family.

The protein localises to the cell inner membrane. It catalyses the reaction 2 Na(+)(in) + 3 H(+)(out) = 2 Na(+)(out) + 3 H(+)(in). Its function is as follows. Na(+)/H(+) antiporter that extrudes sodium in exchange for external protons. The chain is Na(+)/H(+) antiporter NhaB from Enterobacter sp. (strain 638).